The following is a 265-amino-acid chain: Polyglutamine-binding protein 1 (265 aa).

A WW domain is found at 46 to 80 (EGLPPSWYKVFDPSCGLPYYWNADTDLVSWLSPHD). S94 carries the post-translational modification Phosphoserine. The tract at residues 94–265 (SSNADAEEKL…AEASRTKQQD (172 aa)) is disordered. Positions 99–175 (AEEKLDRSHD…DKADREEGKE (77 aa)) are enriched in basic and acidic residues. Repeat copies occupy residues 104–110 (DRSHDKS), 111–117 (DRGHDKS), 118–124 (DRSHEKP), 125–131 (DRGHDKS), 132–138 (DRGHDKS), 139–140 (DR), 141–142 (DR), 143–144 (ER), 150–151 (DR), 152–153 (ER), 154–155 (ER), 156–157 (DR), 158–159 (ER), 160–161 (DR), and 162–163 (DR). The segment at 104 to 138 (DRSHDKSDRGHDKSDRSHEKPDRGHDKSDRGHDKS) is 5 X 7 AA approximate tandem repeats of D-R-[SG]-H-D-K-S. Residues 139-144 (DRDRER) are 3 X 2 AA tandem repeats of [DE]-R. Residues 150–163 (DRERERDRERDRDR) form a 7 X 2 AA tandem repeats of [DE]-R region. The interval 245-255 (YPSPGAVLRAN) is important for interaction with TXNL4A. S247 carries the post-translational modification Phosphoserine.

Interacts with POU3F2/Brn-2, ATXN1, TXNL4A, HTT and AR. Interaction with ATXN1 correlates positively with the length of the polyglutamine tract. Interacts with RNA polymerase II large subunit in a phosphorylation-dependent manner. Forms a ternary complex with ATXN1 mutant and phosphorylated RNA polymerase II. Interacts (via C-terminus) with TXNL4A and CD2BP2. Interacts (via WW domain) with ATN1 and SF3B1, and may interact with additional splice factors. Interacts (via WW domain) with WBP11; Leading to reduce interaction between PQBP1 and TXNL4A. Interacts with CAPRIN1. Interacts with DDX1. Interacts with SFPQ. Interacts with KHSRP.

The protein localises to the nucleus. Its subcellular location is the nucleus speckle. It localises to the cytoplasmic granule. In terms of biological role, intrinsically disordered protein that acts as a scaffold, and which is involved in different processes, such as pre-mRNA splicing, transcription regulation, innate immunity and neuron development. Interacts with splicing-related factors via the intrinsically disordered region and regulates alternative splicing of target pre-mRNA species. May suppress the ability of POU3F2 to transactivate the DRD1 gene in a POU3F2 dependent manner. Can activate transcription directly or via association with the transcription machinery. May be involved in ATXN1 mutant-induced cell death. The interaction with ATXN1 mutant reduces levels of phosphorylated RNA polymerase II large subunit. Involved in the assembly of cytoplasmic stress granule, possibly by participating in the transport of neuronal RNA granules. Also acts as an innate immune sensor of infection by retroviruses, by detecting the presence of reverse-transcribed DNA in the cytosol. Directly binds retroviral reverse-transcribed DNA in the cytosol and interacts with CGAS, leading to activate the cGAS-STING signaling pathway, triggering type-I interferon production. The sequence is that of Polyglutamine-binding protein 1 (PQBP1) from Pongo pygmaeus (Bornean orangutan).